Reading from the N-terminus, the 117-residue chain is Resistin-like gamma (117 aa).

An N-terminal signal peptide occupies residues 1–29 (MLTFNKMKTTTCSLLICISLLQLMVPVNT). 5 disulfides stabilise this stretch: Cys-61-Cys-114, Cys-73-Cys-113, Cys-82-Cys-99, Cys-84-Cys-101, and Cys-88-Cys-103.

This sequence belongs to the resistin/FIZZ family. In terms of assembly, homodimer. Heterodimer with RETNLB. Expressed in colon, lung, spleen, pancreas, ileum and bone marrow (at protein level). In colon, found throughout the crypt and surface epithelium, including goblet cells (at protein level). Highest expression is observed in bone marrow, spleen and lung, with lower levels in other tissues. Detected at low levels in granulocytes, but not found in monocytes or lymphocytes. Has very weak expression in white adipose tissue.

It localises to the secreted. Functionally, probable hormone. Promotes chemotaxis in myeloid cells. In Mus musculus (Mouse), this protein is Resistin-like gamma.